The sequence spans 382 residues: ATP phosphoribosyltransferase regulatory subunit (382 aa).

It belongs to the class-II aminoacyl-tRNA synthetase family. HisZ subfamily. As to quaternary structure, heteromultimer composed of HisG and HisZ subunits.

Its subcellular location is the cytoplasm. It functions in the pathway amino-acid biosynthesis; L-histidine biosynthesis; L-histidine from 5-phospho-alpha-D-ribose 1-diphosphate: step 1/9. Its function is as follows. Required for the first step of histidine biosynthesis. May allow the feedback regulation of ATP phosphoribosyltransferase activity by histidine. This Verminephrobacter eiseniae (strain EF01-2) protein is ATP phosphoribosyltransferase regulatory subunit.